A 221-amino-acid polypeptide reads, in one-letter code: GFP-like non-fluorescent chromoprotein (221 aa).

Positions 62–64 (QYG) form a cross-link, 2-iminomethyl-5-imidazolinone (Gln-Gly). Tyr-63 carries the (E)-2,3-didehydrotyrosine modification.

It belongs to the GFP family. As to quaternary structure, homotetramer. Post-translationally, contains a chromophore consisting of modified amino acid residues. The chromophore is formed by autocatalytic backbone condensation between Xaa-N and Gly-(N+2), oxidation of Tyr-(N+1) to didehydrotyrosine, and formation of a double bond to the alpha-amino nitrogen of residue Xaa-N. Maturation of the chromophore requires nothing other than molecular oxygen.

In terms of biological role, thought to play a role in photoprotection of the coral's resident symbiont microalgae's photosystems from photoinhibition caused by high light levels found near the surface of coral reefs. This chain is GFP-like non-fluorescent chromoprotein, found in Montipora efflorescens (Pore coral).